Consider the following 372-residue polypeptide: G patch domain and ankyrin repeat-containing protein 1 (372 aa).

The disordered stretch occupies residues 74-110 (DSSSSKPQRAEPMRERKKKRRRVTREPAAAGVPRQGR). ANK repeat units follow at residues 124–155 (LAAQ…ARDA) and 156–186 (FWWT…WVGV). Disordered regions lie at residues 211–233 (RESH…SSQF) and 251–271 (AHLL…GVPT). Residues 220–233 (PENQNRSTPSSSQF) show a composition bias toward polar residues. One can recognise a G-patch domain in the interval 271-317 (TSSPGFRLLLRGGWEPGMGLGPRGEGRANPIPTILKRDQEGLGYRSP). Residue K306 forms a Glycyl lysine isopeptide (Lys-Gly) (interchain with G-Cter in SUMO2) linkage. Composition is skewed to basic and acidic residues over residues 330-340 (TRAVSGRERVP) and 348-357 (RENRRQEEKG). The interval 330 to 357 (TRAVSGRERVPRVATLSQRENRRQEEKG) is disordered.

The sequence is that of G patch domain and ankyrin repeat-containing protein 1 (Gpank1) from Mus musculus (Mouse).